Consider the following 455-residue polypeptide: CDP-diacylglycerol--serine O-phosphatidyltransferase (455 aa).

PLD phosphodiesterase domains follow at residues 134 to 160 and 356 to 383; these read VFGVLHVKGFVFDDTVLYSGASINNVY and GDNTYHLKGVWVDDRYILLTGNNLNPRA.

Belongs to the CDP-alcohol phosphatidyltransferase class-II family. Multimeric.

The protein resides in the cytoplasm. It is found in the cell inner membrane. It catalyses the reaction a CDP-1,2-diacyl-sn-glycerol + L-serine = a 1,2-diacyl-sn-glycero-3-phospho-L-serine + CMP + H(+). In Haemophilus influenzae (strain ATCC 51907 / DSM 11121 / KW20 / Rd), this protein is CDP-diacylglycerol--serine O-phosphatidyltransferase (pssA).